Here is a 551-residue protein sequence, read N- to C-terminus: Cation/acetate symporter ActP (551 aa).

The next 14 membrane-spanning stretches (helical) occupy residues 5–25 (HWSA…ALTG), 34–54 (IQAI…TYWA), 77–97 (GLAI…SALV), 104–124 (GLIY…LIAE), 150–170 (LSAC…MVGA), 184–204 (VAVV…GMLA), 207–227 (WVQI…AIMV), 263–283 (ISAL…PHIL), 304–324 (GFIG…ILLV), 356–376 (FFLG…VAGL), 406–426 (VSKI…ILFE), 430–450 (IAFM…PIII), 469–489 (LGLS…VTIL), and 498–518 (YEYP…FFSI).

The protein belongs to the sodium:solute symporter (SSF) (TC 2.A.21) family.

It is found in the cell inner membrane. Transports acetate. The polypeptide is Cation/acetate symporter ActP (Yersinia pseudotuberculosis serotype IB (strain PB1/+)).